A 356-amino-acid chain; its full sequence is uncharacterized protein (356 aa).

Positions 1 to 21 are cleaved as a signal peptide; that stretch reads MHWSRFVGIFLVFSVFSLVNC. A disordered region spans residues 293–317; it reads RPETDYEGANLPNIPSKKGSANQPV.

This is an uncharacterized protein from Acanthamoeba polyphaga mimivirus (APMV).